We begin with the raw amino-acid sequence, 439 residues long: Secreted aspartic protease LUC8 (439 aa).

The first 20 residues, 1–20 (MMHAFHHLAVLLIGSLPASA), serve as a signal peptide directing secretion. N-linked (GlcNAc...) asparagine glycosylation is found at asparagine 33 and asparagine 54. In terms of domain architecture, Peptidase A1 spans 51–435 (YLFNITVGTP…DFETQSFGLA (385 aa)). Residue aspartate 69 is part of the active site. Asparagine 110, asparagine 126, asparagine 179, and asparagine 289 each carry an N-linked (GlcNAc...) asparagine glycan. Residue aspartate 300 is part of the active site. Asparagine 329 and asparagine 373 each carry an N-linked (GlcNAc...) asparagine glycan. A disulfide bond links cysteine 355 and cysteine 391.

The protein belongs to the peptidase A1 family.

Its subcellular location is the secreted. Functionally, secreted aspartic protease; part of the gene cluster that mediates the biosynthesis of the mycotoxin lucilactaene and the lucilactaene-related compound NG-391 that act as cell cycle inhibitors with potent growth inhibitory activity against malarial parasites, moderate growth inhibitory activity against cancer cells, and no activity against bacteria and fungi. Within the cluster, LUC7 and LUC8 encode proteins which are not commonly involved in the biosynthesis of secondary metabolites and are not essential for lucilactaene biosynthesis. The protein is Secreted aspartic protease LUC8 of Fusarium sp.